The chain runs to 80 residues: Serine protease inhibitor Kazal-type 6 (80 aa).

Positions 1 to 23 (MKLSGMFLLLSLALFCFLTGVFS) are cleaved as a signal peptide. At Q24 the chain carries Pyrrolidone carboxylic acid. Residues 24-80 (QGGQVDCGEFQDPKVYCTRESNPHCGSDGQTYGNKCAFCKAIVKSGGKISLKHPGKC) form the Kazal-like domain. Intrachain disulfides connect C30–C62, C40–C59, and C48–C80.

Its subcellular location is the secreted. Its function is as follows. Serine protease inhibitor selective for kallikreins. Efficiently inhibits KLK4, KLK5, KLK6, KLK7, KLK12, KLK13 and KLK14. Doesn't inhibit KLK8. This chain is Serine protease inhibitor Kazal-type 6 (SPINK6), found in Homo sapiens (Human).